Consider the following 443-residue polypeptide: Probable D-serine dehydratase (443 aa).

Lys-118 carries the N6-(pyridoxal phosphate)lysine modification.

It belongs to the serine/threonine dehydratase family. DsdA subfamily. Pyridoxal 5'-phosphate serves as cofactor.

It catalyses the reaction D-serine = pyruvate + NH4(+). In Aeromonas salmonicida (strain A449), this protein is Probable D-serine dehydratase.